Reading from the N-terminus, the 397-residue chain is Probable sugar efflux transporter (397 aa).

12 helical membrane-spanning segments follow: residues 15–35 (VVTL…PVGL), 51–71 (GIML…FMLL), 81–101 (LICL…AWSF), 103–123 (VLVI…SITA), 136–156 (AQAL…GLPV), 170–190 (FLAI…LLPL), 209–229 (PALM…YTAY), 246–266 (FATV…VIFG), 273–293 (ASVL…LLMP), 301–321 (LAIL…GMQV), 333–353 (VAMS…ALVG), and 364–384 (DIGY…VIIF).

Belongs to the major facilitator superfamily. SotB (TC 2.A.1.2) family.

The protein localises to the cell inner membrane. Involved in the efflux of sugars. The physiological role may be the reduction of the intracellular concentration of toxic sugars or sugar metabolites. The sequence is that of Probable sugar efflux transporter from Escherichia fergusonii (strain ATCC 35469 / DSM 13698 / CCUG 18766 / IAM 14443 / JCM 21226 / LMG 7866 / NBRC 102419 / NCTC 12128 / CDC 0568-73).